The sequence spans 262 residues: Type II pantothenate kinase (262 aa).

ATP is bound at residue 7–14 (DAGGSLVK). Glu71 serves as the catalytic Proton acceptor. Residues Thr101, 119–123 (GGLLT), and Tyr135 each bind ATP.

Belongs to the type II pantothenate kinase family. Homodimer.

Its subcellular location is the cytoplasm. The enzyme catalyses (R)-pantothenate + ATP = (R)-4'-phosphopantothenate + ADP + H(+). The protein operates within cofactor biosynthesis; coenzyme A biosynthesis; CoA from (R)-pantothenate: step 1/5. In terms of biological role, catalyzes the phosphorylation of pantothenate (Pan), the first step in CoA biosynthesis. The sequence is that of Type II pantothenate kinase from Oceanobacillus iheyensis (strain DSM 14371 / CIP 107618 / JCM 11309 / KCTC 3954 / HTE831).